A 222-amino-acid chain; its full sequence is Glycerol-3-phosphate acyltransferase (222 aa).

6 helical membrane-spanning segments follow: residues 4–24 (ALLL…IPTG), 56–76 (PAAI…VALV), 87–107 (ALPA…VVLG), 130–150 (FMLN…VIFF), 153–173 (IVSL…LALQ), and 174–191 (LPPP…YVIV).

The protein belongs to the PlsY family. Probably interacts with PlsX.

It is found in the cell inner membrane. The catalysed reaction is an acyl phosphate + sn-glycerol 3-phosphate = a 1-acyl-sn-glycero-3-phosphate + phosphate. It participates in lipid metabolism; phospholipid metabolism. Catalyzes the transfer of an acyl group from acyl-phosphate (acyl-PO(4)) to glycerol-3-phosphate (G3P) to form lysophosphatidic acid (LPA). This enzyme utilizes acyl-phosphate as fatty acyl donor, but not acyl-CoA or acyl-ACP. This chain is Glycerol-3-phosphate acyltransferase, found in Synechocystis sp. (strain ATCC 27184 / PCC 6803 / Kazusa).